The following is a 232-amino-acid chain: Uracil-DNA glycosylase (232 aa).

Asp71 functions as the Proton acceptor in the catalytic mechanism.

The protein belongs to the uracil-DNA glycosylase (UDG) superfamily. UNG family.

The protein resides in the cytoplasm. It catalyses the reaction Hydrolyzes single-stranded DNA or mismatched double-stranded DNA and polynucleotides, releasing free uracil.. Its function is as follows. Excises uracil residues from the DNA which can arise as a result of misincorporation of dUMP residues by DNA polymerase or due to deamination of cytosine. The sequence is that of Uracil-DNA glycosylase from Azotobacter vinelandii (strain DJ / ATCC BAA-1303).